A 1391-amino-acid chain; its full sequence is DNA-directed RNA polymerase subunit beta (1391 aa).

Belongs to the RNA polymerase beta chain family. As to quaternary structure, the RNAP catalytic core consists of 2 alpha, 1 beta, 1 beta' and 1 omega subunit. When a sigma factor is associated with the core the holoenzyme is formed, which can initiate transcription.

It catalyses the reaction RNA(n) + a ribonucleoside 5'-triphosphate = RNA(n+1) + diphosphate. DNA-dependent RNA polymerase catalyzes the transcription of DNA into RNA using the four ribonucleoside triphosphates as substrates. The sequence is that of DNA-directed RNA polymerase subunit beta from Mycoplasma pneumoniae (strain ATCC 29342 / M129 / Subtype 1) (Mycoplasmoides pneumoniae).